The sequence spans 925 residues: Nonribosomal peptide synthetase apvA (925 aa).

Residues 15 to 436 (AREDSGHVVV…TGRAKENMII (422 aa)) form an adenylation (A) domain region. The 81-residue stretch at 564-644 (EPQNDLEKTL…DLATALEKLQ (81 aa)) folds into the Carrier domain. Serine 601 carries the post-translational modification O-(pantetheine 4'-phosphoryl)serine. The segment at 663–909 (PLWLVHPGAG…HYSMIGPDHV (247 aa)) is thioesterase (TE) domain.

Belongs to the NRP synthetase family. As to expression, apvA specifically produces aspulvinone E in hyphea, in contrast to melA which produces aspulvinone E in conidia where it is converted to UV-protective Asp-melanin.

The enzyme catalyses 2 3-(4-hydroxyphenyl)pyruvate + AH2 + 2 ATP + O2 = aspulvinone E + A + 2 AMP + CO2 + 2 diphosphate + H2O + H(+). It participates in secondary metabolite biosynthesis. In terms of biological role, nonribosomal peptide synthetase; part of the gene cluster that mediates the biosynthesis of aspulvinones. The nonribosomal peptide synthetase apvA is responsible for the production of aspulvinone E, the core structure of aspulvinones. ApvA first activates 4-hydroxyphenylpyruvate (HPPA) through its A domain to AMP-HPPA. The HPPA unit is then loaded to the T domain and eventually transferred to the TE domain. Upon loading of another HPPA unit to the T domain, the TE domain promotes the enolate formation on the unit attached. The next step involves head to tail Claisen condensation, followed by the keto-enol tautermerization and a nucleophilic attack on the carbonyl carbon to yield the furanone partial structure. A spontaneous oxidation at the beta-carbon of the thioester might occur in aerobic condition. The TE domain then catalyzes the hydrolysis of the thioester, followed by spontaneous decarboxylation, dehydroxylation and keto-enol tautermerization to give the aspulvinone core. Aspulvinone E is highly unstable and converted to isoaspulvinone E in the presence of light. The structural diversity of the aspulvinones suggests that other tailoring enzymes are involved and have still to be identified. The chain is Nonribosomal peptide synthetase apvA from Aspergillus terreus (strain NIH 2624 / FGSC A1156).